We begin with the raw amino-acid sequence, 116 residues long: Large ribosomal subunit protein bL21c (116 aa).

It belongs to the bacterial ribosomal protein bL21 family. As to quaternary structure, part of the 50S ribosomal subunit.

The protein localises to the plastid. It is found in the chloroplast. In terms of biological role, this protein binds to 23S rRNA. The protein is Large ribosomal subunit protein bL21c of Marchantia polymorpha (Common liverwort).